Here is a 178-residue protein sequence, read N- to C-terminus: Crossover junction endodeoxyribonuclease RuvC (178 aa).

Active-site residues include Asp-14, Glu-73, and Asp-145. Mg(2+) is bound by residues Asp-14, Glu-73, and Asp-145.

Belongs to the RuvC family. As to quaternary structure, homodimer which binds Holliday junction (HJ) DNA. The HJ becomes 2-fold symmetrical on binding to RuvC with unstacked arms; it has a different conformation from HJ DNA in complex with RuvA. In the full resolvosome a probable DNA-RuvA(4)-RuvB(12)-RuvC(2) complex forms which resolves the HJ. Mg(2+) serves as cofactor.

The protein resides in the cytoplasm. It catalyses the reaction Endonucleolytic cleavage at a junction such as a reciprocal single-stranded crossover between two homologous DNA duplexes (Holliday junction).. Functionally, the RuvA-RuvB-RuvC complex processes Holliday junction (HJ) DNA during genetic recombination and DNA repair. Endonuclease that resolves HJ intermediates. Cleaves cruciform DNA by making single-stranded nicks across the HJ at symmetrical positions within the homologous arms, yielding a 5'-phosphate and a 3'-hydroxyl group; requires a central core of homology in the junction. The consensus cleavage sequence is 5'-(A/T)TT(C/G)-3'. Cleavage occurs on the 3'-side of the TT dinucleotide at the point of strand exchange. HJ branch migration catalyzed by RuvA-RuvB allows RuvC to scan DNA until it finds its consensus sequence, where it cleaves and resolves the cruciform DNA. In Nitrosomonas eutropha (strain DSM 101675 / C91 / Nm57), this protein is Crossover junction endodeoxyribonuclease RuvC.